A 67-amino-acid polypeptide reads, in one-letter code: Small ribosomal subunit protein eS27 (67 aa).

Zn(2+)-binding residues include Cys-22, Cys-25, Cys-41, and Cys-44. Residues 22-44 (CPDCGNEQVTFSHAAMVVRCLVC) form a C4-type zinc finger.

It belongs to the eukaryotic ribosomal protein eS27 family. As to quaternary structure, part of the 30S ribosomal subunit. The cofactor is Zn(2+).

The chain is Small ribosomal subunit protein eS27 from Pyrobaculum calidifontis (strain DSM 21063 / JCM 11548 / VA1).